The primary structure comprises 173 residues: uncharacterized protein (173 aa).

The N-terminal stretch at 1-20 is a signal peptide; it reads MWYKVLGIVSLCSVYVSTQG. Asn-53 carries N-linked (GlcNAc...) asparagine glycosylation.

In terms of tissue distribution, component of the acid-insoluble organic matrix of calcified shell layers (at protein level).

The protein resides in the secreted. This is an uncharacterized protein from Haliotis asinina (Donkey's ear abalone).